Consider the following 289-residue polypeptide: MQGVYPAIVTPFKDGKVDYDGLRTNIDFLIENGISGVIPVGTTGESPTLTPLEHEKVIENVVEFVDGRVEVIAGTGSNSTSEALEFSQYAEDIGVDGVLLITPYYNKPTQEGLKRHFGEIANSINVPIALYNVPSRTALNIEPETIKYLFEEYSNITAIKEANPNLSQVSEVLDSCNIDVLSGNDELTLPIISLGGKGVVSVIANIAPKEFVQMVDFANAGKFDKAKEIHYKLFPIMKLMFVETNPIPIKTAMNMLGMPSGELRLPLCEMAEGNKLKLQNALNTVGLLK.

Residue threonine 43 coordinates pyruvate. Tyrosine 131 (proton donor/acceptor) is an active-site residue. The active-site Schiff-base intermediate with substrate is lysine 160. Valine 200 lines the pyruvate pocket.

The protein belongs to the DapA family. As to quaternary structure, homotetramer; dimer of dimers.

The protein localises to the cytoplasm. It carries out the reaction L-aspartate 4-semialdehyde + pyruvate = (2S,4S)-4-hydroxy-2,3,4,5-tetrahydrodipicolinate + H2O + H(+). Its pathway is amino-acid biosynthesis; L-lysine biosynthesis via DAP pathway; (S)-tetrahydrodipicolinate from L-aspartate: step 3/4. Catalyzes the condensation of (S)-aspartate-beta-semialdehyde [(S)-ASA] and pyruvate to 4-hydroxy-tetrahydrodipicolinate (HTPA). The protein is 4-hydroxy-tetrahydrodipicolinate synthase of Methanococcus maripaludis (strain C5 / ATCC BAA-1333).